The chain runs to 164 residues: UPF0304 protein ESA_00925 (164 aa).

Belongs to the UPF0304 family.

The chain is UPF0304 protein ESA_00925 from Cronobacter sakazakii (strain ATCC BAA-894) (Enterobacter sakazakii).